A 728-amino-acid polypeptide reads, in one-letter code: 1,4-alpha-glucan branching enzyme GlgB (728 aa).

Aspartate 405 acts as the Nucleophile in catalysis. Residue glutamate 458 is the Proton donor of the active site.

It belongs to the glycosyl hydrolase 13 family. GlgB subfamily. Monomer.

The enzyme catalyses Transfers a segment of a (1-&gt;4)-alpha-D-glucan chain to a primary hydroxy group in a similar glucan chain.. It functions in the pathway glycan biosynthesis; glycogen biosynthesis. Its function is as follows. Catalyzes the formation of the alpha-1,6-glucosidic linkages in glycogen by scission of a 1,4-alpha-linked oligosaccharide from growing alpha-1,4-glucan chains and the subsequent attachment of the oligosaccharide to the alpha-1,6 position. The protein is 1,4-alpha-glucan branching enzyme GlgB of Salmonella paratyphi A (strain ATCC 9150 / SARB42).